A 940-amino-acid polypeptide reads, in one-letter code: Lysine-specific demethylase 7A (940 aa).

A PHD-type zinc finger spans residues 37 to 88; sequence PVYCVCRQPYDVNRFMIECDVCKDWFHGSCVGVEEHHAVDIDLYHCPDCAAL. Positions 97–114 are linker; it reads RRNWHRHDYTEVDDGSKP. The JmjC domain maps to 230–386; the sequence is FSDTKMSELV…MQLRCYEMEK (157 aa). Thr-279 is a substrate binding site. The Fe cation site is built by His-282 and Asp-284. Lys-299 provides a ligand contact to substrate. His-354 provides a ligand contact to Fe cation. Disordered stretches follow at residues 483–509, 599–670, 710–729, 818–854, and 876–920; these read VKSQ…HSRR, LYTA…PDCT, SQKP…TSTS, NAQD…SSSI, and SPER…MATA. Residue Ser-604 is modified to Phosphoserine. The segment covering 613–623 has biased composition (polar residues); sequence TQNANMKTEQS. Over residues 714 to 724 the composition is skewed to basic and acidic residues; the sequence is SRQEIPVKREC.

The protein belongs to the JHDM1 histone demethylase family. JHDM1D subfamily. Fe(2+) serves as cofactor.

It localises to the nucleus. It catalyses the reaction N(6),N(6)-dimethyl-L-lysyl(9)-[histone H3] + 2 2-oxoglutarate + 2 O2 = L-lysyl(9)-[histone H3] + 2 formaldehyde + 2 succinate + 2 CO2. The enzyme catalyses N(6),N(6)-dimethyl-L-lysyl(27)-[histone H3] + 2 2-oxoglutarate + 2 O2 = L-lysyl(27)-[histone H3] + 2 formaldehyde + 2 succinate + 2 CO2. It carries out the reaction N(6),N(6)-dimethyl-L-lysyl(36)-[histone H3] + 2-oxoglutarate + O2 = N(6)-methyl-L-lysyl(36)-[histone H3] + formaldehyde + succinate + CO2. The catalysed reaction is N(6)-methyl-L-lysyl(20)-[histone H4] + 2-oxoglutarate + O2 = L-lysyl(20)-[histone H4] + formaldehyde + succinate + CO2. In terms of biological role, histone demethylase required for brain development. Specifically demethylates dimethylated 'Lys-9', 'Lys-27' and 'Lys-36' (H3K9me2, H3K27me2, H3K36me2, respectively) of histone H3 and monomethylated histone H4 'Lys-20' residue (H4K20Me1), thereby playing a central role in histone code. Specifically binds trimethylated 'Lys-4' of histone H3 (H3K4me3), affecting histone demethylase specificity: in presence of H3K4me3, it has no demethylase activity toward H3K9me2, while it has high activity toward H3K27me2. Demethylates H3K9me2 in absence of H3K4me3. Has activity toward H4K20Me1 only when nucleosome is used as a substrate and when not histone octamer is used as substrate. This is Lysine-specific demethylase 7A (Kdm7a) from Mus musculus (Mouse).